Reading from the N-terminus, the 267-residue chain is Tryptophan 2,3-dioxygenase (267 aa).

Substrate contacts are provided by residues 44-48 (FITIH) and R114. Heme is bound at residue H225. Substrate is bound at residue T239.

This sequence belongs to the tryptophan 2,3-dioxygenase family. Homotetramer. Requires heme as cofactor.

The enzyme catalyses L-tryptophan + O2 = N-formyl-L-kynurenine. It participates in amino-acid degradation; L-tryptophan degradation via kynurenine pathway; L-kynurenine from L-tryptophan: step 1/2. Heme-dependent dioxygenase that catalyzes the oxidative cleavage of the L-tryptophan (L-Trp) pyrrole ring and converts L-tryptophan to N-formyl-L-kynurenine. Catalyzes the oxidative cleavage of the indole moiety. This Nocardioides sp. (strain ATCC BAA-499 / JS614) protein is Tryptophan 2,3-dioxygenase.